Reading from the N-terminus, the 255-residue chain is uncharacterized protein (255 aa).

A signal peptide spans 1–23 (MKRLNKLVLGISFLFLVISITAG). C24 carries N-palmitoyl cysteine lipidation. Residue C24 is the site of S-diacylglycerol cysteine attachment.

The protein belongs to the staphylococcal tandem lipoprotein family.

The protein localises to the cell membrane. This is an uncharacterized protein from Staphylococcus aureus (strain N315).